A 293-amino-acid polypeptide reads, in one-letter code: 33 kDa chaperonin (293 aa).

2 disulfides stabilise this stretch: Cys238–Cys240 and Cys271–Cys274.

Belongs to the HSP33 family. Post-translationally, under oxidizing conditions two disulfide bonds are formed involving the reactive cysteines. Under reducing conditions zinc is bound to the reactive cysteines and the protein is inactive.

It is found in the cytoplasm. Its function is as follows. Redox regulated molecular chaperone. Protects both thermally unfolding and oxidatively damaged proteins from irreversible aggregation. Plays an important role in the bacterial defense system toward oxidative stress. The polypeptide is 33 kDa chaperonin (Staphylococcus aureus (strain USA300)).